Consider the following 245-residue polypeptide: 1-(5-phosphoribosyl)-5-[(5-phosphoribosylamino)methylideneamino] imidazole-4-carboxamide isomerase (245 aa).

Catalysis depends on Asp7, which acts as the Proton acceptor. The Proton donor role is filled by Asp129.

This sequence belongs to the HisA/HisF family.

It is found in the cytoplasm. It carries out the reaction 1-(5-phospho-beta-D-ribosyl)-5-[(5-phospho-beta-D-ribosylamino)methylideneamino]imidazole-4-carboxamide = 5-[(5-phospho-1-deoxy-D-ribulos-1-ylimino)methylamino]-1-(5-phospho-beta-D-ribosyl)imidazole-4-carboxamide. It participates in amino-acid biosynthesis; L-histidine biosynthesis; L-histidine from 5-phospho-alpha-D-ribose 1-diphosphate: step 4/9. This chain is 1-(5-phosphoribosyl)-5-[(5-phosphoribosylamino)methylideneamino] imidazole-4-carboxamide isomerase, found in Shewanella oneidensis (strain ATCC 700550 / JCM 31522 / CIP 106686 / LMG 19005 / NCIMB 14063 / MR-1).